A 192-amino-acid chain; its full sequence is 3-isopropylmalate dehydratase small subunit (192 aa).

The protein belongs to the LeuD family. LeuD type 1 subfamily. Heterodimer of LeuC and LeuD.

The catalysed reaction is (2R,3S)-3-isopropylmalate = (2S)-2-isopropylmalate. It participates in amino-acid biosynthesis; L-leucine biosynthesis; L-leucine from 3-methyl-2-oxobutanoate: step 2/4. Its function is as follows. Catalyzes the isomerization between 2-isopropylmalate and 3-isopropylmalate, via the formation of 2-isopropylmaleate. The polypeptide is 3-isopropylmalate dehydratase small subunit (Zymomonas mobilis subsp. mobilis (strain ATCC 31821 / ZM4 / CP4)).